A 642-amino-acid chain; its full sequence is DNA polymerase III subunit tau (642 aa).

An ATP-binding site is contributed by glycine 45–threonine 52. Cysteine 64, cysteine 73, cysteine 76, and cysteine 79 together coordinate Zn(2+). Residues threonine 385–valine 441 are disordered. A compositionally biased stretch (pro residues) spans alanine 394–leucine 404. A compositionally biased stretch (polar residues) spans asparagine 416–threonine 425.

Belongs to the DnaX/STICHEL family. As to quaternary structure, the DNA polymerase holoenzyme is a complex that contains 10 different types of subunits. These subunits are organized into 3 functionally essential subassemblies: the pol III core, the beta sliding clamp processivity factor and the clamp-loading complex. The pol III core (subunits alpha, epsilon and theta) contains the polymerase and the 3'-5' exonuclease proofreading activities. The polymerase is tethered to the template via the sliding clamp processivity factor. The clamp-loading complex assembles the beta processivity factor onto the primer template and plays a central role in the organization and communication at the replication fork. This complex contains delta, delta', psi and chi, and copies of either or both of two different DnaX proteins, gamma and tau. The composition of the holoenzyme is, therefore: (alpha,epsilon,theta)[2]-(isoform:gamma/tau)[3]-delta,delta', psi,chi-beta[4].

It carries out the reaction DNA(n) + a 2'-deoxyribonucleoside 5'-triphosphate = DNA(n+1) + diphosphate. Functionally, DNA polymerase III is a complex, multichain enzyme responsible for most of the replicative synthesis in bacteria. This DNA polymerase also exhibits 3' to 5' exonuclease activity. In terms of biological role, serves as a scaffold to help in the dimerization of the core complex. Seems to interact with the delta subunit to transfer the beta subunit on the DNA. This is DNA polymerase III subunit tau (dnaX) from Salmonella typhimurium (strain LT2 / SGSC1412 / ATCC 700720).